The primary structure comprises 310 residues: Olfactory receptor 8B12 (310 aa).

Topologically, residues 1–24 (MAAKNSSVTEFILEGLTHQPGLRI) are extracellular. An N-linked (GlcNAc...) asparagine glycan is attached at Asn5. Residues 25–45 (PLFFLFLGFYTVTVVGNLGLI) form a helical membrane-spanning segment. Residues 46-53 (TLIGLNSH) lie on the Cytoplasmic side of the membrane. A helical transmembrane segment spans residues 54–74 (LHTPMYFFLFNLSLIDFCFST). Topologically, residues 75-98 (TITPKMLMSFVSRKNIISFTGCMT) are extracellular. Residues Cys96 and Cys188 are joined by a disulfide bond. A helical membrane pass occupies residues 99 to 119 (QLFFFCFFVVSESFILSAMAY). At 120 to 138 (DRYVAICNPLLYTVTMSCQ) the chain is on the cytoplasmic side. The chain crosses the membrane as a helical span at residues 139–159 (VCLLLLLGAYGMGFAGAMAHT). The Extracellular portion of the chain corresponds to 160–196 (GSIMNLTFCADNLVNHFMCDILPLLELSCNSSYMNEL). N-linked (GlcNAc...) asparagine glycosylation is found at Asn164 and Asn189. The chain crosses the membrane as a helical span at residues 197–216 (VVFIVVAVDVGMPIVTVFIS). Residues 217–236 (YALILSSILHNSSTEGRSKA) are Cytoplasmic-facing. Residues 237 to 257 (FSTCSSHIIVVSLFFGSGAFM) traverse the membrane as a helical segment. Residues 258 to 270 (YLKPLSILPLEQG) lie on the Extracellular side of the membrane. A helical transmembrane segment spans residues 271–291 (KVSSLFYTIIVPVLNPLIYSL). Residues 292–310 (RNKDVKVALRRTLGRKIFS) are Cytoplasmic-facing.

It belongs to the G-protein coupled receptor 1 family.

It localises to the cell membrane. Odorant receptor. This chain is Olfactory receptor 8B12 (OR8B12), found in Homo sapiens (Human).